Consider the following 190-residue polypeptide: Ion-translocating oxidoreductase complex subunit B (190 aa).

The hydrophobic stretch occupies residues 1 to 26; it reads MTALWIAIAALSALGLLFGLVLGYAA. The 4Fe-4S domain occupies 32–90; the sequence is EEDPVAEQVDEILPQSQCGQCGYPGCRPYAEAVANGEMINKCAPGGEQVMLKLAELLNV. 12 residues coordinate [4Fe-4S] cluster: C49, C52, C57, C73, C115, C118, C121, C125, C145, C148, C151, and C155. 2 4Fe-4S ferredoxin-type domains span residues 106–135 and 136–165; these read QVAY…GATR and AMHT…MRPV.

Belongs to the 4Fe4S bacterial-type ferredoxin family. RnfB subfamily. The complex is composed of six subunits: RnfA, RnfB, RnfC, RnfD, RnfE and RnfG. [4Fe-4S] cluster is required as a cofactor.

It is found in the cell inner membrane. In terms of biological role, part of a membrane-bound complex that couples electron transfer with translocation of ions across the membrane. The polypeptide is Ion-translocating oxidoreductase complex subunit B (Serratia proteamaculans (strain 568)).